The primary structure comprises 299 residues: MYSEIFDFLPPERIKINEPMKEHSSFKIGGPVDLMVLPESIEEIQRITHYCRKKDIPCFVFGLGSNILVRDKGIRGVAIKVGNNLKNISICNDTIFAEAGVRLAELSQAAADYSLSGLEFAEGIPGSLGGAVVMNAGAYGGEMKDVLKEVRAITPDGNLSSFKPEEMKLRYRGSIFQEEELIVVSALMQLHKERAEDIRARMQDFAKRRREKQPLEYPSAGSTFRRPAGFFVGPMIEEMGLKGFKVGGAEVSRKHAGFIINSGNATANEVLELIAIVKAKAKEHYGIELETEVKVVGEE.

The FAD-binding PCMH-type domain occupies 28–193; it reads IGGPVDLMVL…VSALMQLHKE (166 aa). Arg-172 is an active-site residue. Ser-222 (proton donor) is an active-site residue. Residue Glu-292 is part of the active site.

The protein belongs to the MurB family. The cofactor is FAD.

It localises to the cytoplasm. It catalyses the reaction UDP-N-acetyl-alpha-D-muramate + NADP(+) = UDP-N-acetyl-3-O-(1-carboxyvinyl)-alpha-D-glucosamine + NADPH + H(+). Its pathway is cell wall biogenesis; peptidoglycan biosynthesis. Functionally, cell wall formation. The sequence is that of UDP-N-acetylenolpyruvoylglucosamine reductase from Syntrophomonas wolfei subsp. wolfei (strain DSM 2245B / Goettingen).